Here is a 57-residue protein sequence, read N- to C-terminus: DNA-directed RNA polymerase subunit Rpo6 (57 aa).

Belongs to the archaeal Rpo6/eukaryotic RPB6 RNA polymerase subunit family. As to quaternary structure, part of the RNA polymerase complex.

The protein resides in the cytoplasm. The catalysed reaction is RNA(n) + a ribonucleoside 5'-triphosphate = RNA(n+1) + diphosphate. DNA-dependent RNA polymerase (RNAP) catalyzes the transcription of DNA into RNA using the four ribonucleoside triphosphates as substrates. This Pyrococcus furiosus (strain ATCC 43587 / DSM 3638 / JCM 8422 / Vc1) protein is DNA-directed RNA polymerase subunit Rpo6.